We begin with the raw amino-acid sequence, 322 residues long: Gluconeogenesis factor (322 aa).

NAD(+) is bound by residues threonine 13, 217-219 (NVM), 263-267 (KYAKE), and 300-301 (RH).

It belongs to the gluconeogenesis factor family.

It is found in the cytoplasm. In terms of biological role, required for morphogenesis under gluconeogenic growth conditions. This Halalkalibacterium halodurans (strain ATCC BAA-125 / DSM 18197 / FERM 7344 / JCM 9153 / C-125) (Bacillus halodurans) protein is Gluconeogenesis factor.